The sequence spans 516 residues: MEPAVSLAVCALLFLLWVRVKGLEFVLIHQRWVFVCLFLLPLSLIFDIYYYVRAWVVFKLSSAPRLHEQRVRDIQKQVREWKEQGSKTFMCTGRPGWLTVSLRVGKYKKTHKNIMINLMDILEVDTKKQIVRVEPLVSMGQVTALLNSIGWTLPVLPELDDLTVGGLIMGTGIESSSHKYGLFQHICTAYELILADGSFVRCTPSENSDLFYAVPWSCGTLGFLVAAEIRIIPAKKYVKLRFEPVRGLEAICEKFTRESQRLENHFVEGLLYSLDEAVIMTGVMTDDVEPSKLNSIGSYYKPWFFKHVENYLKTNREGLEYIPLRHYYHRHTRSIFWELQDIIPFGNNPIFRYLFGWMVPPKISLLKLTQGETLRKLYEQHHVVQDMLVPMKCMSQALHTFQNDIHVYPIWLCPFILPSQPGLVHPKGDEAELYVDIGAYGEPRVKHFEARSCMRQLEKFVRSVHGFQMLYADCYMNREEFWEMFDGSLYHKLRKQLGCQDAFPEVYDKICKAARH.

Positions 1–22 (MEPAVSLAVCALLFLLWVRVKG) are cleaved as a signal peptide. Residues 23-31 (LEFVLIHQR) lie on the Lumenal side of the membrane. The helical transmembrane segment at 32 to 52 (WVFVCLFLLPLSLIFDIYYYV) threads the bilayer. The Cytoplasmic segment spans residues 53–516 (RAWVVFKLSS…YDKICKAARH (464 aa)). The region spanning 58–234 (FKLSSAPRLH…VAAEIRIIPA (177 aa)) is the FAD-binding PCMH-type domain. 163–175 (TVGGLIMGTGIES) lines the FAD pocket.

Belongs to the FAD-binding oxidoreductase/transferase type 4 family. It depends on FAD as a cofactor.

Its subcellular location is the endoplasmic reticulum membrane. The protein resides in the golgi apparatus membrane. It carries out the reaction 5alpha-cholest-8-en-3beta-ol + NADP(+) = zymosterol + NADPH + H(+). It catalyses the reaction cholesterol + NADP(+) = desmosterol + NADPH + H(+). The catalysed reaction is lanosterol + NADPH + H(+) = 24,25-dihydrolanosterol + NADP(+). It participates in steroid biosynthesis; cholesterol biosynthesis. In terms of biological role, catalyzes the reduction of the delta-24 double bond of sterol intermediates during cholesterol biosynthesis. In addition to its cholesterol-synthesizing activity, can protect cells from oxidative stress by reducing caspase 3 activity during apoptosis induced by oxidative stress. Also protects against amyloid-beta peptide-induced apoptosis. The protein is Delta(24)-sterol reductase (Dhcr24) of Mus musculus (Mouse).